A 282-amino-acid chain; its full sequence is 4-hydroxy-3-methylbut-2-enyl diphosphate reductase (282 aa).

A [4Fe-4S] cluster-binding site is contributed by cysteine 12. Residues histidine 40 and histidine 72 each coordinate (2E)-4-hydroxy-3-methylbut-2-enyl diphosphate. Dimethylallyl diphosphate-binding residues include histidine 40 and histidine 72. Residues histidine 40 and histidine 72 each coordinate isopentenyl diphosphate. Cysteine 94 contributes to the [4Fe-4S] cluster binding site. Histidine 122 provides a ligand contact to (2E)-4-hydroxy-3-methylbut-2-enyl diphosphate. Residue histidine 122 coordinates dimethylallyl diphosphate. Residue histidine 122 coordinates isopentenyl diphosphate. The active-site Proton donor is glutamate 124. Threonine 160 serves as a coordination point for (2E)-4-hydroxy-3-methylbut-2-enyl diphosphate. Cysteine 188 lines the [4Fe-4S] cluster pocket. The (2E)-4-hydroxy-3-methylbut-2-enyl diphosphate site is built by serine 216, asparagine 218, and serine 260. Residues serine 216, asparagine 218, and serine 260 each coordinate dimethylallyl diphosphate. Isopentenyl diphosphate contacts are provided by serine 216, asparagine 218, and serine 260.

It belongs to the IspH family. [4Fe-4S] cluster is required as a cofactor.

It catalyses the reaction isopentenyl diphosphate + 2 oxidized [2Fe-2S]-[ferredoxin] + H2O = (2E)-4-hydroxy-3-methylbut-2-enyl diphosphate + 2 reduced [2Fe-2S]-[ferredoxin] + 2 H(+). The enzyme catalyses dimethylallyl diphosphate + 2 oxidized [2Fe-2S]-[ferredoxin] + H2O = (2E)-4-hydroxy-3-methylbut-2-enyl diphosphate + 2 reduced [2Fe-2S]-[ferredoxin] + 2 H(+). It functions in the pathway isoprenoid biosynthesis; dimethylallyl diphosphate biosynthesis; dimethylallyl diphosphate from (2E)-4-hydroxy-3-methylbutenyl diphosphate: step 1/1. Its pathway is isoprenoid biosynthesis; isopentenyl diphosphate biosynthesis via DXP pathway; isopentenyl diphosphate from 1-deoxy-D-xylulose 5-phosphate: step 6/6. Functionally, catalyzes the conversion of 1-hydroxy-2-methyl-2-(E)-butenyl 4-diphosphate (HMBPP) into a mixture of isopentenyl diphosphate (IPP) and dimethylallyl diphosphate (DMAPP). Acts in the terminal step of the DOXP/MEP pathway for isoprenoid precursor biosynthesis. In Geobacter metallireducens (strain ATCC 53774 / DSM 7210 / GS-15), this protein is 4-hydroxy-3-methylbut-2-enyl diphosphate reductase.